The chain runs to 204 residues: ATP-dependent Clp protease proteolytic subunit (204 aa).

Ser-101 (nucleophile) is an active-site residue. The active site involves His-126.

This sequence belongs to the peptidase S14 family. Fourteen ClpP subunits assemble into 2 heptameric rings which stack back to back to give a disk-like structure with a central cavity, resembling the structure of eukaryotic proteasomes.

It localises to the cytoplasm. The enzyme catalyses Hydrolysis of proteins to small peptides in the presence of ATP and magnesium. alpha-casein is the usual test substrate. In the absence of ATP, only oligopeptides shorter than five residues are hydrolyzed (such as succinyl-Leu-Tyr-|-NHMec, and Leu-Tyr-Leu-|-Tyr-Trp, in which cleavage of the -Tyr-|-Leu- and -Tyr-|-Trp bonds also occurs).. Its function is as follows. Cleaves peptides in various proteins in a process that requires ATP hydrolysis. Has a chymotrypsin-like activity. Plays a major role in the degradation of misfolded proteins. This is ATP-dependent Clp protease proteolytic subunit from Deinococcus radiodurans (strain ATCC 13939 / DSM 20539 / JCM 16871 / CCUG 27074 / LMG 4051 / NBRC 15346 / NCIMB 9279 / VKM B-1422 / R1).